We begin with the raw amino-acid sequence, 492 residues long: Glycosyltransferase alg8 (492 aa).

Transmembrane regions (helical) follow at residues 13–32 (GWLL…PPQV), 47–69 (IGVW…LYVV), 379–401 (LTVA…LLWV), and 421–443 (PAYP…HVFF).

The protein belongs to the glycosyltransferase 2 family.

It is found in the cell membrane. It participates in glycan biosynthesis; alginate biosynthesis. Possibly a processive enzyme that polymerizes GDP-mannuronic acid. This chain is Glycosyltransferase alg8 (alg8), found in Azotobacter vinelandii.